The primary structure comprises 673 residues: Potassium voltage-gated channel subfamily KQT member 1 (673 aa).

Disordered regions lie at residues 1–28 and 61–80; these read MAAA…RGSA and GPSS…LGPR. Over 1 to 118 the chain is Cytoplasmic; the sequence is MAAATSPPRA…YNFLERPTGW (118 aa). Position 27 is a phosphoserine (serine 27). Positions 66-75 are enriched in low complexity; that stretch reads AAPAASPAAA. The chain crosses the membrane as a helical span at residues 119 to 140; it reads KCFVYHFAVFLIVLVCLIFSVL. The Extracellular segment spans residues 141 to 151; the sequence is STIEQYVALAT. Residues 152–174 traverse the membrane as a helical segment; sequence GTLFWMEIVLVVFFGTEYAVRLW. The Cytoplasmic portion of the chain corresponds to 175 to 190; the sequence is SAGCRSKYVGIWGRLR. The chain crosses the membrane as a helical span at residues 191-216; it reads FARKPISIIDLIVVVASMVVLCVGSK. Residues 217-224 lie on the Extracellular side of the membrane; that stretch reads GQVFATSA. The helical; Voltage-sensor transmembrane segment at 225-240 threads the bilayer; sequence IRGIRFLQILRMLHVD. The segment at 236–244 is interaction with KCNE3; the sequence is MLHVDRQGG. The Cytoplasmic portion of the chain corresponds to 241–258; the sequence is RQGGTWRLLGSVVFIHRQ. Glutamine 242 is an a 1,2-diacyl-sn-glycero-3-phospho-(1D-myo-inositol-4,5-bisphosphate) binding site. Residues 259-281 form a helical membrane-spanning segment; sequence ELITTLYIGFLGLIFSSYFVYLA. The Extracellular segment spans residues 282–297; the sequence is EKDAVNESGQVEFGSY. Asparagine 287 carries N-linked (GlcNAc...) asparagine glycosylation. Residues 298–318 constitute an intramembrane region (pore-forming); the sequence is ADALWWGVVTVTTIGYGDKVP. Over 319–320 the chain is Extracellular; the sequence is QT. Residues 321–346 traverse the membrane as a helical segment; it reads WVGKTIASCFSVFAISFFALPAGILG. Residues 347-673 are Cytoplasmic-facing; sequence SGFALKVQQK…VPGRGPEEGS (327 aa). Residues 368-380 form an interaction with CALM region; sequence AAASLIQTAWRCY. 2 positions are modified to phosphoserine: serine 405 and serine 407. Residues 514–528 are interaction with CALM; calcium-dependent; the sequence is KVIRRMQYFVAKKKF. Residues 534 to 571 are interaction with KCNE1 C-terminus; the sequence is PYDVRDVIEQYSQGHLNLMVRIKELQRRLDQSIGRPAL. The tract at residues 587–615 is interaction with AKAP9; the sequence is IGARLNRVEDKVTQLDQRLELITDMLQQL. The interval 588–619 is C-terminal assembly domain (tetramerization); the sequence is GARLNRVEDKVTQLDQRLELITDMLQQLLSLH. The disordered stretch occupies residues 619-673; it reads HRGGTPGSRAPGGGGAQVAQPCSGGSINPELFLPSNALPTYEQLTVPGRGPEEGS. The segment covering 622–634 has biased composition (gly residues); that stretch reads GTPGSRAPGGGGA.

It belongs to the potassium channel family. KQT (TC 1.A.1.15) subfamily. Kv7.1/KCNQ1 sub-subfamily. As to quaternary structure, tetramer. Heterotetramer with KCNE1; targets to the membrane raft. Interacts (via C-terminus) with CALM; forms a heterooctameric structure (with 4:4 KCNQ1:CALM stoichiometry) in a calcium-independent manner. Interacts with AKAP9; targets protein kinase A (PKA) catalytic and regulatory subunits and protein phosphatase 1 (PP1) to the KCNQ1-KCNE1 complex, allowing PKA-mediated phosphorylation and increase of delayed rectifier potassium channel activity. Interacts with KCNE2; form a heterooligomer complex that targets to the membrane raft and leading to currents with an apparently instantaneous activation, a rapid deactivation process and a linear current-voltage relationship and decreases the amplitude of the outward current. Interacts with AP2M1; mediates estrogen-induced internalization via clathrin-coated vesicles. Interacts with NEDD4L; promotes internalization and decreases I(Ks) currents. Interacts with USP2; counteracts the NEDD4L-specific down-regulation of I(Ks) and restore plasma membrane localization. Heterotetramer with KCNQ5; has a voltage-gated potassium channel activity. Interacts with KCNE3; four KCNE3 molecules are bound to one KCNQ1 tetramer (4:4 KCNQ1:KCNE3 stoichiometry); alters membrane raft localization; affects KCNQ1 structure and gating properties. Interacts with KCNE4; impairs KCNQ1 localization in lipid rafts and inhibits voltage-gated potassium channel activity. Interacts with KCNE5; impairs KCNQ1 localization in lipid rafts and only conducts current upon strong and continued depolarization. Interacts with SLC5A3; forms coregulatory channel-transporter complexes that modulate Na(+)-coupled myo-inositol influx through the transporter. Post-translationally, ubiquitinated by NEDD4L; promotes internalization. The ubiquitinylated form is internalized through a clathrin-mediated endocytosis by interacting with AP2M1 and is recycled back to the cell membrane via RAB4A and RAB11A. Deubiquitinated by USP2; counteracts the NEDD4L-specific down-regulation of I(Ks) and restores the membrane localization.

It is found in the cell membrane. The protein resides in the cytoplasmic vesicle membrane. It localises to the early endosome. Its subcellular location is the membrane raft. The protein localises to the endoplasmic reticulum. It is found in the basolateral cell membrane. The protein resides in the apical cell membrane. The catalysed reaction is K(+)(in) = K(+)(out). PIP2 molecule is essential to activate KCNQ channels by inducing the coupling of the voltage-sensing domain (VSD) and the pore-forming domain (PD). Upon channel activation, PIP2 disrupts the VSD-calmodulin/CALM interactions, causing the release of CALM from the VSD which triggers the opening of the gate. Calcium potentiates KCNQ1 channel current through calcium-bound CALM. Calcium-bound CALM competes with PIP2 to stabilize the channel open state. Functionally, pore-forming subunit of the voltage-gated potassium (Kv) channel involved in the regulation of cardiomyocyte excitability and important in normal development and functions of myocardium, inner ear, stomach and colon. Associates with KCNE beta subunits that modulates current kinetics. Induces a voltage-dependent by rapidly activating and slowly deactivating potassium-selective outward current. Also promotes a delayed voltage activated potassium current showing outward rectification characteristic. During beta-adrenergic receptor stimulation participates in cardiac repolarization by associating with KCNE1 to form the I(Ks) cardiac potassium current that increases the amplitude and slows down the activation kinetics of outward potassium current I(Ks). Muscarinic agonist oxotremorine-M strongly suppresses KCNQ1/KCNE1 current. When associated with KCNE3, forms the potassium channel that is important for cyclic AMP-stimulated intestinal secretion of chloride ions. This interaction with KCNE3 is reduced by 17beta-estradiol, resulting in the reduction of currents. During conditions of increased substrate load, maintains the driving force for proximal tubular and intestinal sodium ions absorption, gastric acid secretion, and cAMP-induced jejunal chloride ions secretion. Allows the provision of potassium ions to the luminal membrane of the secretory canaliculus in the resting state as well as during stimulated acid secretion. When associated with KCNE2, forms a heterooligomer complex leading to currents with an apparently instantaneous activation, a rapid deactivation process and a linear current-voltage relationship and decreases the amplitude of the outward current. When associated with KCNE4, inhibits voltage-gated potassium channel activity. When associated with KCNE5, this complex only conducts current upon strong and continued depolarization. Also forms a heterotetramer with KCNQ5 that has a voltage-gated potassium channel activity. Binds with phosphatidylinositol 4,5-bisphosphate. KCNQ1-KCNE2 channel associates with Na(+)-coupled myo-inositol symporter in the apical membrane of choroid plexus epithelium and regulates the myo-inositol gradient between blood and cerebrospinal fluid with an impact on neuron excitability. The sequence is that of Potassium voltage-gated channel subfamily KQT member 1 from Sus scrofa (Pig).